A 407-amino-acid chain; its full sequence is Protein ATC1/LIC4 (407 aa).

The protein localises to the cytoplasm. The protein resides in the nucleus. In terms of biological role, involved in cation homeostasis and in the regulation of the cation stress signaling cascades. This Eremothecium gossypii (strain ATCC 10895 / CBS 109.51 / FGSC 9923 / NRRL Y-1056) (Yeast) protein is Protein ATC1/LIC4 (ATC1).